The sequence spans 402 residues: Phosphoglycerate kinase (402 aa).

Substrate contacts are provided by residues 24–26 (DFN), Arg40, 63–66 (HFGR), Arg122, and Arg155. ATP-binding positions include Lys206, Gly297, Glu328, and 358 to 361 (GGDS).

This sequence belongs to the phosphoglycerate kinase family. As to quaternary structure, monomer.

The protein localises to the cytoplasm. It carries out the reaction (2R)-3-phosphoglycerate + ATP = (2R)-3-phospho-glyceroyl phosphate + ADP. It functions in the pathway carbohydrate degradation; glycolysis; pyruvate from D-glyceraldehyde 3-phosphate: step 2/5. This Prochlorococcus marinus (strain MIT 9515) protein is Phosphoglycerate kinase.